Here is a 46-residue protein sequence, read N- to C-terminus: Endochitinase 2 (46 aa).

The protein belongs to the glycosyl hydrolase 19 family. Chitinase class I subfamily.

It carries out the reaction Random endo-hydrolysis of N-acetyl-beta-D-glucosaminide (1-&gt;4)-beta-linkages in chitin and chitodextrins.. Functionally, defense against chitin-containing fungal and bacterial pathogens. The polypeptide is Endochitinase 2 (Arachis hypogaea (Peanut)).